The primary structure comprises 92 residues: DNA-binding protein HU (92 aa).

The segment at 58 to 92 is disordered; sequence AGTARNPRTGETVNRPASKTARFQVGEGLKSSLNS.

The protein belongs to the bacterial histone-like protein family. In terms of assembly, homodimer.

In terms of biological role, histone-like DNA-binding protein which is capable of wrapping DNA to stabilize it, and thus to prevent its denaturation under extreme environmental conditions. The chain is DNA-binding protein HU (hup) from Caulobacter vibrioides (strain ATCC 19089 / CIP 103742 / CB 15) (Caulobacter crescentus).